The primary structure comprises 1052 residues: Kruppel-like factor 18 (1052 aa).

3 C2H2-type zinc fingers span residues Tyr-964–His-988, Tyr-994–His-1018, and Tyr-1024–His-1046.

This sequence belongs to the krueppel C2H2-type zinc-finger protein family.

The protein resides in the nucleus. The chain is Kruppel-like factor 18 from Homo sapiens (Human).